The chain runs to 359 residues: Protein trichome birefringence-like 42 (359 aa).

The chain crosses the membrane as a helical; Signal-anchor for type II membrane protein span at residues 7–25; sequence LFLLLLIFLVDLSDYGVLA. A GDS motif motif is present at residues 110-112; that stretch reads GDS. The DCXHWCLPGXXDXWN motif motif lies at 335-349; it reads DCSHWCLPGVPDAWN.

Belongs to the PC-esterase family. TBL subfamily.

Its subcellular location is the membrane. Its function is as follows. May act as a bridging protein that binds pectin and other cell wall polysaccharides. Probably involved in maintaining esterification of pectins. May be involved in the specific O-acetylation of cell wall polymers. In Arabidopsis thaliana (Mouse-ear cress), this protein is Protein trichome birefringence-like 42 (TBL42).